We begin with the raw amino-acid sequence, 360 residues long: Phospho-N-acetylmuramoyl-pentapeptide-transferase (360 aa).

Residues 1–25 are Periplasmic-facing; the sequence is MLVWLAEHLVKYYSGFNVFSYLTFR. Residues 26–46 form a helical membrane-spanning segment; it reads AIVSLLTALFISLWMGPRMIA. The Cytoplasmic segment spans residues 47–71; the sequence is RLQKLSFGQVVRNDGPESHFSKRGT. Residues 72–92 traverse the membrane as a helical segment; it reads PTMGGIMILTAIVISVLLWAY. Pro93 is a topological domain (periplasmic). The chain crosses the membrane as a helical span at residues 94-114; the sequence is SNPYVWCVLVVLIGYGIIGFV. Residues 115–131 are Cytoplasmic-facing; sequence DDYRKVVRKDTKGLIAR. Residues 132–152 traverse the membrane as a helical segment; it reads WKYFWMSVIALGVAFALYLVG. Topologically, residues 153–167 are periplasmic; the sequence is KDTPVTQLVVPFFKD. The chain crosses the membrane as a helical span at residues 168–188; the sequence is VMPQLGLFYILLSYFVIVGTG. Residues 189-198 lie on the Cytoplasmic side of the membrane; the sequence is NAVNLTDGLD. A helical transmembrane segment spans residues 199–219; the sequence is GLAIMPTVFVAAGFALVAWAT. Residues 220–235 are Periplasmic-facing; that stretch reads GNMNFANYLHIPYLRH. The chain crosses the membrane as a helical span at residues 236-256; sequence AGELVIVCTAIVGAGLGFLWF. Residues 257 to 262 are Cytoplasmic-facing; it reads NTYPAQ. The helical transmembrane segment at 263–283 threads the bilayer; the sequence is VFMGDVGSLALGGALGIIAVL. The Periplasmic portion of the chain corresponds to 284–287; sequence LRQE. The helical transmembrane segment at 288-308 threads the bilayer; it reads FLLVIMGGVFVVETLSVILQV. The Cytoplasmic portion of the chain corresponds to 309 to 337; it reads GSFKLRGQRIFRMAPIHHHYELKGWPEPR. A helical transmembrane segment spans residues 338 to 358; that stretch reads VIVRFWIISLMLVLIGLATLK. Residues 359-360 are Periplasmic-facing; that stretch reads VR.

Belongs to the glycosyltransferase 4 family. MraY subfamily. It depends on Mg(2+) as a cofactor.

It is found in the cell inner membrane. It carries out the reaction UDP-N-acetyl-alpha-D-muramoyl-L-alanyl-gamma-D-glutamyl-meso-2,6-diaminopimeloyl-D-alanyl-D-alanine + di-trans,octa-cis-undecaprenyl phosphate = di-trans,octa-cis-undecaprenyl diphospho-N-acetyl-alpha-D-muramoyl-L-alanyl-D-glutamyl-meso-2,6-diaminopimeloyl-D-alanyl-D-alanine + UMP. Its pathway is cell wall biogenesis; peptidoglycan biosynthesis. Functionally, catalyzes the initial step of the lipid cycle reactions in the biosynthesis of the cell wall peptidoglycan: transfers peptidoglycan precursor phospho-MurNAc-pentapeptide from UDP-MurNAc-pentapeptide onto the lipid carrier undecaprenyl phosphate, yielding undecaprenyl-pyrophosphoryl-MurNAc-pentapeptide, known as lipid I. The chain is Phospho-N-acetylmuramoyl-pentapeptide-transferase from Salmonella paratyphi C (strain RKS4594).